The primary structure comprises 211 residues: Pyridoxine/pyridoxamine 5'-phosphate oxidase (211 aa).

Substrate-binding positions include 7 to 10 (RTDY) and lysine 65. Residues 60 to 65 (RIVLIK), 75 to 76 (FT), arginine 81, and lysine 82 contribute to the FMN site. Substrate-binding residues include tyrosine 122, arginine 126, and serine 130. FMN-binding positions include 139–140 (QS) and tryptophan 183. A substrate-binding site is contributed by 189–191 (RLH). Arginine 193 provides a ligand contact to FMN.

This sequence belongs to the pyridoxamine 5'-phosphate oxidase family. Homodimer. It depends on FMN as a cofactor.

The enzyme catalyses pyridoxamine 5'-phosphate + O2 + H2O = pyridoxal 5'-phosphate + H2O2 + NH4(+). It catalyses the reaction pyridoxine 5'-phosphate + O2 = pyridoxal 5'-phosphate + H2O2. It functions in the pathway cofactor metabolism; pyridoxal 5'-phosphate salvage; pyridoxal 5'-phosphate from pyridoxamine 5'-phosphate: step 1/1. Its pathway is cofactor metabolism; pyridoxal 5'-phosphate salvage; pyridoxal 5'-phosphate from pyridoxine 5'-phosphate: step 1/1. Its function is as follows. Catalyzes the oxidation of either pyridoxine 5'-phosphate (PNP) or pyridoxamine 5'-phosphate (PMP) into pyridoxal 5'-phosphate (PLP). The protein is Pyridoxine/pyridoxamine 5'-phosphate oxidase of Herminiimonas arsenicoxydans.